The chain runs to 328 residues: Pantothenate kinase (328 aa).

Positions 1 to 12 (MAAPLNAQTRAP) are enriched in polar residues. The interval 1 to 22 (MAAPLNAQTRAPQATGRAPDFS) is disordered. 113-120 (GSVAVGKS) is an ATP binding site.

The protein belongs to the prokaryotic pantothenate kinase family.

It localises to the cytoplasm. The catalysed reaction is (R)-pantothenate + ATP = (R)-4'-phosphopantothenate + ADP + H(+). It participates in cofactor biosynthesis; coenzyme A biosynthesis; CoA from (R)-pantothenate: step 1/5. The chain is Pantothenate kinase from Corynebacterium efficiens (strain DSM 44549 / YS-314 / AJ 12310 / JCM 11189 / NBRC 100395).